Consider the following 398-residue polypeptide: Acetate kinase (398 aa).

Asn-8 contacts Mg(2+). Position 15 (Lys-15) interacts with ATP. Arg-89 contributes to the substrate binding site. The active-site Proton donor/acceptor is the Asp-146. ATP-binding positions include 206 to 210, 283 to 285, and 331 to 335; these read HIGNG, DMR, and GMGEN. Glu-383 contacts Mg(2+).

The protein belongs to the acetokinase family. In terms of assembly, homodimer. It depends on Mg(2+) as a cofactor. Mn(2+) serves as cofactor.

The protein resides in the cytoplasm. The catalysed reaction is acetate + ATP = acetyl phosphate + ADP. Its pathway is metabolic intermediate biosynthesis; acetyl-CoA biosynthesis; acetyl-CoA from acetate: step 1/2. In terms of biological role, catalyzes the formation of acetyl phosphate from acetate and ATP. Can also catalyze the reverse reaction. In Streptococcus pyogenes serotype M12 (strain MGAS2096), this protein is Acetate kinase.